A 517-amino-acid polypeptide reads, in one-letter code: Perilipin-1 (517 aa).

Serine 81 carries the phosphoserine modification. Threonine 85 bears the Phosphothreonine mark. 5 positions are modified to phosphoserine: serine 126, serine 130, serine 132, serine 137, and serine 174. Residues 195-216 (DKESAPSSGRQRTQKAPKAKPS) are disordered. Residues threonine 223, threonine 298, and threonine 300 each carry the phosphothreonine modification. The segment at 286–320 (LAASQDESHDDQTDTEGEETDDEEEEEESEAEENV) is disordered. The required for interaction with CIDEC stretch occupies residues 290–321 (QDESHDDQTDTEGEETDDEEEEEESEAEENVL). Residues 298-318 (TDTEGEETDDEEEEEESEAEE) show a composition bias toward acidic residues. Phosphoserine is present on residues serine 314, serine 384, serine 386, serine 410, serine 433, serine 439, serine 460, serine 492, and serine 494. The segment at 425–490 (SAEAERKGSG…AMPREKPARR (66 aa)) is disordered.

Belongs to the perilipin family. As to quaternary structure, interacts with ABHD5. Interacts with CIDEC. Interacts with AQP7. In terms of processing, major cAMP-dependent protein kinase-substrate in adipocytes, also dephosphorylated by PP1. When phosphorylated, may be maximally sensitive to HSL and when unphosphorylated, may play a role in the inhibition of lipolysis, by acting as a barrier in lipid droplet.

It is found in the endoplasmic reticulum. The protein localises to the lipid droplet. In terms of biological role, modulator of adipocyte lipid metabolism. Coats lipid storage droplets to protect them from breakdown by hormone-sensitive lipase (HSL). Its absence may result in leanness. Plays a role in unilocular lipid droplet formation by activating CIDEC. Their interaction promotes lipid droplet enlargement and directional net neutral lipid transfer. May modulate lipolysis and triglyceride levels. The sequence is that of Perilipin-1 (Plin1) from Mus musculus (Mouse).